The following is a 1548-amino-acid chain: Dicer-like protein 1 (1548 aa).

Positions 1 to 41 are enriched in basic and acidic residues; sequence MGDPAAHEMADLERGFSSEDDAEYRSGDDEASKFVENEPSK. The disordered stretch occupies residues 1–48; the sequence is MGDPAAHEMADLERGFSSEDDAEYRSGDDEASKFVENEPSKRGKISQK. The Helicase ATP-binding domain occupies 106 to 289; the sequence is LFERAKQQNT…QAAIELEGLL (184 aa). 119–126 provides a ligand contact to ATP; the sequence is LDTGSGKT. The DEAH box motif lies at 232-235; sequence DEAH. The Helicase C-terminal domain occupies 428-589; it reads TLSKLLEEYF…FCNTQPEDRL (162 aa). The Dicer dsRNA-binding fold domain maps to 624–718; it reads SLPILQAFLN…RSKFVEKRHV (95 aa). The 136-residue stretch at 871 to 1006 folds into the PAZ domain; it reads PLLRHVADRD…FVLEPMRISP (136 aa). 2 RNase III domains span residues 1051-1197 and 1248-1411; these read LTKD…MTTR and AQKI…VDSK. The Mg(2+) site is built by Glu1288, Asp1397, and Glu1400. The DRBM domain occupies 1445 to 1518; the sequence is TFFTQYVFET…ARKALDKLRS (74 aa). Residues Cys1457, His1489, Cys1530, and Cys1532 each contribute to the Zn(2+) site.

This sequence belongs to the helicase family. Dicer subfamily. Mg(2+) serves as cofactor. Mn(2+) is required as a cofactor.

Functionally, dicer-like endonuclease involved in cleaving double-stranded RNA in the RNA interference (RNAi) pathway. Produces 21 to 25 bp dsRNAs (siRNAs) which target the selective destruction of homologous RNAs leading to sequence-specific suppression of gene expression, called post-transcriptional gene silencing (PTGS). Part of a broad host defense response against viral infection and transposons. The protein is Dicer-like protein 1 (DCL-1) of Cryphonectria parasitica (Chestnut blight fungus).